The sequence spans 375 residues: Mitochondrial phosphate carrier protein 3, mitochondrial (375 aa).

Residues 76 to 96 traverse the membrane as a helical segment; the sequence is AFYAACTFGGILSCGLTHMTV. 3 Solcar repeats span residues 76 to 160, 173 to 257, and 274 to 353; these read AFYA…FKKT, YKTL…IVEM, and LQLG…FKVF. The Mitochondrial matrix portion of the chain corresponds to 97–134; sequence TPLDLVKCNMQIDPAKYKSISSGFGILLKEQGVKGFFR. The chain crosses the membrane as a helical span at residues 135–154; it reads GWVPTLLGYSAQGACKFGFY. Residues 155–175 are Mitochondrial intermembrane-facing; it reads EYFKKTYSDLAGPEYTAKYKT. The chain crosses the membrane as a helical span at residues 176–196; that stretch reads LIYLAGSASAEIIADIALCPF. The Mitochondrial matrix segment spans residues 197 to 231; sequence EAVKVRVQTQPGFARGMSDGFPKFIKSEGYGGLYK. A helical membrane pass occupies residues 232 to 251; it reads GLAPLWGRQIPYTMMKFASF. The Mitochondrial intermembrane portion of the chain corresponds to 252–272; that stretch reads ETIVEMIYKYAIPNPKSECSK. The helical transmembrane segment at 273–293 threads the bilayer; sequence GLQLGVSFAGGYVAGVFCAIV. Topologically, residues 294-332 are mitochondrial matrix; that stretch reads SHPADNLVSFLNNAKGATVGDAVKKIGMVGLFTRGLPLR. Residues 333-353 form a helical membrane-spanning segment; the sequence is IVMIGTLTGAQWGLYDAFKVF. Topologically, residues 354-375 are mitochondrial intermembrane; that stretch reads VGLPTTGGVAPAPAIAATEAKA.

It belongs to the mitochondrial carrier (TC 2.A.29) family. Expressed in stems, leaves and flowers. Strong expression in vascular tissues.

The protein localises to the mitochondrion inner membrane. Its function is as follows. Transport of phosphate groups from the cytosol to the mitochondrial matrix. Mediates salt stress tolerance through an ATP-dependent pathway and via modulation of the gibberellin metabolism. In Arabidopsis thaliana (Mouse-ear cress), this protein is Mitochondrial phosphate carrier protein 3, mitochondrial (MPT3).